The sequence spans 473 residues: 6-phospho-beta-glucosidase (473 aa).

Glu-174 serves as the catalytic Proton donor. Glu-366 serves as the catalytic Nucleophile.

The protein belongs to the glycosyl hydrolase 1 family.

It carries out the reaction 6-phospho-beta-D-glucosyl-(1-&gt;4)-D-glucose + H2O = D-glucose 6-phosphate + D-glucose. The sequence is that of 6-phospho-beta-glucosidase (abgA) from Clostridium longisporum.